A 434-amino-acid polypeptide reads, in one-letter code: Glutamyl-tRNA reductase (434 aa).

Substrate is bound by residues 49 to 52, Ser109, 114 to 116, and Gln120; these read TCNR and EPQ. The Nucleophile role is filled by Cys50. NADP(+) is bound at residue 189 to 194; it reads GAGEMC.

The protein belongs to the glutamyl-tRNA reductase family. In terms of assembly, homodimer.

It carries out the reaction (S)-4-amino-5-oxopentanoate + tRNA(Glu) + NADP(+) = L-glutamyl-tRNA(Glu) + NADPH + H(+). The protein operates within porphyrin-containing compound metabolism; protoporphyrin-IX biosynthesis; 5-aminolevulinate from L-glutamyl-tRNA(Glu): step 1/2. Functionally, catalyzes the NADPH-dependent reduction of glutamyl-tRNA(Glu) to glutamate 1-semialdehyde (GSA). This is Glutamyl-tRNA reductase from Citrifermentans bemidjiense (strain ATCC BAA-1014 / DSM 16622 / JCM 12645 / Bem) (Geobacter bemidjiensis).